The primary structure comprises 418 residues: Gamma-glutamyl phosphate reductase (418 aa).

This sequence belongs to the gamma-glutamyl phosphate reductase family.

The protein localises to the cytoplasm. The enzyme catalyses L-glutamate 5-semialdehyde + phosphate + NADP(+) = L-glutamyl 5-phosphate + NADPH + H(+). It participates in amino-acid biosynthesis; L-proline biosynthesis; L-glutamate 5-semialdehyde from L-glutamate: step 2/2. In terms of biological role, catalyzes the NADPH-dependent reduction of L-glutamate 5-phosphate into L-glutamate 5-semialdehyde and phosphate. The product spontaneously undergoes cyclization to form 1-pyrroline-5-carboxylate. This is Gamma-glutamyl phosphate reductase from Chlorobium chlorochromatii (strain CaD3).